The following is a 392-amino-acid chain: Phosphoglycerate kinase (392 aa).

Substrate contacts are provided by residues 21-23, arginine 36, 59-62, arginine 113, and arginine 146; these read DLN and HLGR. ATP is bound by residues lysine 197, glutamate 319, and 345-348; that span reads GGDT.

It belongs to the phosphoglycerate kinase family. As to quaternary structure, monomer.

It localises to the cytoplasm. It carries out the reaction (2R)-3-phosphoglycerate + ATP = (2R)-3-phospho-glyceroyl phosphate + ADP. The protein operates within carbohydrate degradation; glycolysis; pyruvate from D-glyceraldehyde 3-phosphate: step 2/5. This is Phosphoglycerate kinase from Alkalilimnicola ehrlichii (strain ATCC BAA-1101 / DSM 17681 / MLHE-1).